We begin with the raw amino-acid sequence, 164 residues long: Crossover junction endodeoxyribonuclease RuvC (164 aa).

Active-site residues include D7, E67, and D139. D7, E67, and D139 together coordinate Mg(2+).

Belongs to the RuvC family. As to quaternary structure, homodimer which binds Holliday junction (HJ) DNA. The HJ becomes 2-fold symmetrical on binding to RuvC with unstacked arms; it has a different conformation from HJ DNA in complex with RuvA. In the full resolvosome a probable DNA-RuvA(4)-RuvB(12)-RuvC(2) complex forms which resolves the HJ. It depends on Mg(2+) as a cofactor.

Its subcellular location is the cytoplasm. The enzyme catalyses Endonucleolytic cleavage at a junction such as a reciprocal single-stranded crossover between two homologous DNA duplexes (Holliday junction).. Functionally, the RuvA-RuvB-RuvC complex processes Holliday junction (HJ) DNA during genetic recombination and DNA repair. Endonuclease that resolves HJ intermediates. Cleaves cruciform DNA by making single-stranded nicks across the HJ at symmetrical positions within the homologous arms, yielding a 5'-phosphate and a 3'-hydroxyl group; requires a central core of homology in the junction. The consensus cleavage sequence is 5'-(A/T)TT(C/G)-3'. Cleavage occurs on the 3'-side of the TT dinucleotide at the point of strand exchange. HJ branch migration catalyzed by RuvA-RuvB allows RuvC to scan DNA until it finds its consensus sequence, where it cleaves and resolves the cruciform DNA. This Geobacter sp. (strain M21) protein is Crossover junction endodeoxyribonuclease RuvC.